Reading from the N-terminus, the 334-residue chain is uncharacterized protein (334 aa).

Serine 126 contacts substrate. Tyrosine 151 functions as the Proton acceptor in the catalytic mechanism.

This sequence belongs to the NAD(P)-dependent epimerase/dehydratase family. dTDP-glucose dehydratase subfamily.

This is an uncharacterized protein from Escherichia coli O111:H-.